A 205-amino-acid chain; its full sequence is Outer-membrane lipoprotein LolB (205 aa).

Positions 1–17 (MFLRHCITFTLIALLAG) are cleaved as a signal peptide. Cys-18 is lipidated: N-palmitoyl cysteine. A lipid anchor (S-diacylglycerol cysteine) is attached at Cys-18.

It belongs to the LolB family. Monomer.

It localises to the cell outer membrane. Functionally, plays a critical role in the incorporation of lipoproteins in the outer membrane after they are released by the LolA protein. In Pseudomonas putida (strain GB-1), this protein is Outer-membrane lipoprotein LolB.